The following is a 68-amino-acid chain: MKLQTLMDWEEAHEKNRKNKRKAEALVAALQTCRVQDPPGTSTDCYLLPVLKPGHFKKNCPSHKKKPP.

In Homo sapiens (Human), this protein is Putative transcript Y 10 protein (TTTY10).